The primary structure comprises 337 residues: Inositol 2-dehydrogenase 1 (337 aa).

This sequence belongs to the Gfo/Idh/MocA family. In terms of assembly, homotetramer.

The catalysed reaction is myo-inositol + NAD(+) = scyllo-inosose + NADH + H(+). Functionally, involved in the oxidation of myo-inositol (MI) to 2-keto-myo-inositol (2KMI or 2-inosose). In Paenarthrobacter aurescens (strain TC1), this protein is Inositol 2-dehydrogenase 1.